Reading from the N-terminus, the 417-residue chain is Nucleosome assembly protein (417 aa).

The interval 1–47 is disordered; the sequence is MSDPIRTKPKSSMQIDNAPTPHNTPASVLNPSYLKNGNPVRAQAQEQ. Residues 10–35 show a composition bias toward polar residues; the sequence is KSSMQIDNAPTPHNTPASVLNPSYLK. 2 positions are modified to phosphothreonine: Thr20 and Thr24. A Phosphoserine modification is found at Ser27. A Glycyl lysine isopeptide (Lys-Gly) (interchain with G-Cter in ubiquitin) cross-link involves residue Lys50. Thr53 bears the Phosphothreonine mark. 6 positions are modified to phosphoserine: Ser69, Ser76, Ser82, Ser98, Ser104, and Ser140. Positions 143–362 are interaction with NBA1; sequence EQPKPEQIAK…IPRAVDWFTG (220 aa). Phosphoserine; by CK2 occurs at positions 159 and 177. Residues 330–356 constitute a DNA-binding region (H-T-H motif); the sequence is LEEDLEERLALDYSIGEQLKDKLIPRA. The interval 364–417 is disordered; sequence ALEFEFEEDEEEADEDEDEEEDDDHGLEDDDGESAEEQDDFAGRPEQAPECKQS. The span at 367–403 shows a compositional bias: acidic residues; that stretch reads FEFEEDEEEADEDEDEEEDDDHGLEDDDGESAEEQDD. The residue at position 397 (Ser397) is a Phosphoserine; by CK2. Over residues 404–417 the composition is skewed to basic and acidic residues; it reads FAGRPEQAPECKQS.

It belongs to the nucleosome assembly protein (NAP) family. As to quaternary structure, component of the GIN4 complex composed of at least BNI5, CDC3, CDC10, CDC11, CDC12, GIN4, NAP1 and SHS1 which forms a ring at the bud neck. Homodimer (in-vitro). Interacts with the B-type cyclin CLB2. Interacts with 60S ribosomal protein L18 (RPL18A or RPL18B), CKA2, CKI1, eukaryotic elongation factor 1 complex eEF1A (TEF1 or TEF2), FOL1, HSC82, HTA2, HTB2, HTZ1, KAP114, KCC4, NIS1, SSA1, SSA2, SSB1, SSC1, SHM1, SIP5 and TCO89. Interacts with NBA1. Interacts with histone H3/H4 heterodimers. In terms of processing, phosphorylation by CK2 is required for normal progression through S phase. CK2 phosphorylation is not required for correct bud formation nor histone binding.

The protein localises to the cytoplasm. Its subcellular location is the nucleus. It is found in the bud neck. Its function is as follows. Acidic protein, which assembles histones into an octamer (in vitro). Involved in the regulation of the localization and the function of the septins during mitosis. Involved in the function of B-type cyclins. The protein is Nucleosome assembly protein of Saccharomyces cerevisiae (strain ATCC 204508 / S288c) (Baker's yeast).